We begin with the raw amino-acid sequence, 272 residues long: Ethanolamine ammonia-lyase small subunit (272 aa).

The adenosylcob(III)alamin site is built by V161, E182, and C211.

It belongs to the EutC family. As to quaternary structure, the basic unit is a heterodimer which dimerizes to form tetramers. The heterotetramers trimerize; 6 large subunits form a core ring with 6 small subunits projecting outwards. The cofactor is adenosylcob(III)alamin.

It localises to the bacterial microcompartment. It carries out the reaction ethanolamine = acetaldehyde + NH4(+). Its pathway is amine and polyamine degradation; ethanolamine degradation. Its function is as follows. Catalyzes the deamination of various vicinal amino-alcohols to oxo compounds. Allows this organism to utilize ethanolamine as the sole source of nitrogen and carbon in the presence of external vitamin B12. The protein is Ethanolamine ammonia-lyase small subunit of Pseudomonas putida (strain ATCC 47054 / DSM 6125 / CFBP 8728 / NCIMB 11950 / KT2440).